Reading from the N-terminus, the 45-residue chain is Pyruvate dehydrogenase E1 component (45 aa).

Homodimer. Requires thiamine diphosphate as cofactor.

It catalyses the reaction N(6)-[(R)-lipoyl]-L-lysyl-[protein] + pyruvate + H(+) = N(6)-[(R)-S(8)-acetyldihydrolipoyl]-L-lysyl-[protein] + CO2. Its function is as follows. The pyruvate dehydrogenase complex catalyzes the overall conversion of pyruvate to acetyl-CoA and CO(2). It contains multiple copies of three enzymatic components: pyruvate dehydrogenase (E1), dihydrolipoamide acetyltransferase (E2) and lipoamide dehydrogenase (E3). The sequence is that of Pyruvate dehydrogenase E1 component from Azotobacter vinelandii.